Consider the following 176-residue polypeptide: Large ribosomal subunit protein uL16 (176 aa).

It belongs to the universal ribosomal protein uL16 family.

The polypeptide is Large ribosomal subunit protein uL16 (Thermoplasma acidophilum (strain ATCC 25905 / DSM 1728 / JCM 9062 / NBRC 15155 / AMRC-C165)).